Reading from the N-terminus, the 187-residue chain is Large ribosomal subunit protein uL10 (187 aa).

It belongs to the universal ribosomal protein uL10 family. In terms of assembly, part of the ribosomal stalk of the 50S ribosomal subunit. The N-terminus interacts with L11 and the large rRNA to form the base of the stalk. The C-terminus forms an elongated spine to which L12 dimers bind in a sequential fashion forming a multimeric L10(L12)X complex.

Forms part of the ribosomal stalk, playing a central role in the interaction of the ribosome with GTP-bound translation factors. This Synechococcus sp. (strain JA-3-3Ab) (Cyanobacteria bacterium Yellowstone A-Prime) protein is Large ribosomal subunit protein uL10.